A 298-amino-acid chain; its full sequence is Acetylglutamate kinase (298 aa).

Residues 69–70, Arg-91, and Asn-191 contribute to the substrate site; that span reads GG.

This sequence belongs to the acetylglutamate kinase family. ArgB subfamily.

The protein resides in the cytoplasm. It catalyses the reaction N-acetyl-L-glutamate + ATP = N-acetyl-L-glutamyl 5-phosphate + ADP. The protein operates within amino-acid biosynthesis; L-arginine biosynthesis; N(2)-acetyl-L-ornithine from L-glutamate: step 2/4. In terms of biological role, catalyzes the ATP-dependent phosphorylation of N-acetyl-L-glutamate. This chain is Acetylglutamate kinase, found in Neisseria meningitidis serogroup A / serotype 4A (strain DSM 15465 / Z2491).